The following is a 544-amino-acid chain: uncharacterized protein (544 aa).

An N-terminal signal peptide occupies residues 1-34 (MIARRMLCARPWGPSCVVCALCGALAALVPAVGA). Positions 38 to 69 (AVPAPGTPAPPAHTASEAVPPAPEPRAEGEQP) are disordered.

The protein belongs to the TP096X family.

This is an uncharacterized protein from Treponema pallidum (strain Nichols).